A 488-amino-acid polypeptide reads, in one-letter code: Glutamyl-tRNA(Gln) amidotransferase subunit A (488 aa).

Catalysis depends on charge relay system residues K77 and S152. S176 functions as the Acyl-ester intermediate in the catalytic mechanism.

Belongs to the amidase family. GatA subfamily. Heterotrimer of A, B and C subunits.

It catalyses the reaction L-glutamyl-tRNA(Gln) + L-glutamine + ATP + H2O = L-glutaminyl-tRNA(Gln) + L-glutamate + ADP + phosphate + H(+). In terms of biological role, allows the formation of correctly charged Gln-tRNA(Gln) through the transamidation of misacylated Glu-tRNA(Gln) in organisms which lack glutaminyl-tRNA synthetase. The reaction takes place in the presence of glutamine and ATP through an activated gamma-phospho-Glu-tRNA(Gln). The protein is Glutamyl-tRNA(Gln) amidotransferase subunit A of Streptococcus pyogenes serotype M12 (strain MGAS2096).